We begin with the raw amino-acid sequence, 238 residues long: Ribonuclease PH (238 aa).

Residues 64–86 form a disordered region; that stretch reads GMLPRSTGSRMDREAARGKQSGR. Phosphate-binding positions include Arg86 and 124–126; that span reads GTR.

It belongs to the RNase PH family. Homohexameric ring arranged as a trimer of dimers.

It carries out the reaction tRNA(n+1) + phosphate = tRNA(n) + a ribonucleoside 5'-diphosphate. In terms of biological role, phosphorolytic 3'-5' exoribonuclease that plays an important role in tRNA 3'-end maturation. Removes nucleotide residues following the 3'-CCA terminus of tRNAs; can also add nucleotides to the ends of RNA molecules by using nucleoside diphosphates as substrates, but this may not be physiologically important. Probably plays a role in initiation of 16S rRNA degradation (leading to ribosome degradation) during starvation. In Methylobacillus flagellatus (strain ATCC 51484 / DSM 6875 / VKM B-1610 / KT), this protein is Ribonuclease PH.